Reading from the N-terminus, the 978-residue chain is NACHT, LRR and PYD domains-containing protein 4E (978 aa).

In terms of domain architecture, Pyrin spans 1–93; it reads MASFFSDFGL…MERAGREIAG (93 aa). The NACHT domain maps to 148–471; that stretch reads HMVFLQGVAG…FHLLKSHVDH (324 aa). ATP is bound at residue 154-161; it reads GVAGIGKS. LRR repeat units follow at residues 594–617, 694–717, 746–773, 802–825, 859–882, and 916–940; these read CSTLKKLSLSTQNILSEGQEHSYT, LLNLSLTFLSHNDVKLLCDVLNQA, SKMLKHLNLSSNNLDKGISSLSKALCHP, NKTLTHLDISFNDLKDEGLKVLCG, NQNLRNLQISNNKIEDAGVKLLCD, and CKTLLGINLQENALDHSGLVALFEA.

The protein belongs to the NLRP family.

Its function is as follows. May be involved in inflammation and recognition of cytosolic pathogen-associated molecular patterns (PAMPs) not intercepted by membrane-bound receptors. The chain is NACHT, LRR and PYD domains-containing protein 4E (Nlrp4e) from Mus musculus (Mouse).